Consider the following 105-residue polypeptide: uncharacterized protein (105 aa).

Over 1–48 (MAPKAFFVCLPWVLPRHALIVRQAGNPYHFLAYTNPRAPGKLQDSHCP) the chain is Extracellular. The helical transmembrane segment at 49 to 69 (VFFMGIIIITIITVTLAIIII) threads the bilayer. A topological domain (cytoplasmic) is located at residue Asn70. Residues 71-91 (IIFLTLFDDGMCFYCSLLTFS) form a helical membrane-spanning segment. The Extracellular portion of the chain corresponds to 92 to 105 (FVSFNFDHFDHFDL).

The protein resides in the membrane. This is an uncharacterized protein from Saccharomyces cerevisiae (strain ATCC 204508 / S288c) (Baker's yeast).